The chain runs to 228 residues: Superoxide dismutase [Mn], mitochondrial (228 aa).

The N-terminal 24 residues, 1 to 24, are a transit peptide targeting the mitochondrion; the sequence is MALRNLMTKKPFAGILTFRQQLRC. The Mn(2+) site is built by His52, His100, Asp189, and His193.

The protein belongs to the iron/manganese superoxide dismutase family. Homotetramer. Requires Mn(2+) as cofactor.

The protein localises to the mitochondrion matrix. It carries out the reaction 2 superoxide + 2 H(+) = H2O2 + O2. Functionally, destroys superoxide anion radicals which are normally produced within the cells and which are toxic to biological systems. The polypeptide is Superoxide dismutase [Mn], mitochondrial (SODA) (Capsicum annuum (Capsicum pepper)).